A 288-amino-acid chain; its full sequence is Purine nucleoside phosphorylase (288 aa).

A phosphate-binding site is contributed by 65–66 (RN). M201 serves as a coordination point for substrate. T202 is a binding site for phosphate.

It belongs to the PNP/MTAP phosphorylase family. MTAP subfamily. As to quaternary structure, homotrimer.

It localises to the cytoplasm. It is found in the nucleus. The catalysed reaction is a purine D-ribonucleoside + phosphate = a purine nucleobase + alpha-D-ribose 1-phosphate. Its pathway is purine metabolism; purine nucleoside salvage. Its function is as follows. Purine nucleoside phosphorylase involved in purine salvage. This chain is Purine nucleoside phosphorylase, found in Drosophila pseudoobscura pseudoobscura (Fruit fly).